The sequence spans 263 residues: Triosephosphate isomerase (263 aa).

Asn-10 to Lys-12 is a substrate binding site. The active-site Electrophile is His-104. Glu-176 functions as the Proton acceptor in the catalytic mechanism. Substrate is bound by residues Gly-182, Ser-221, and Gly-242–Gly-243.

It belongs to the triosephosphate isomerase family. In terms of assembly, homodimer.

The protein localises to the cytoplasm. The catalysed reaction is D-glyceraldehyde 3-phosphate = dihydroxyacetone phosphate. The protein operates within carbohydrate biosynthesis; gluconeogenesis. It functions in the pathway carbohydrate degradation; glycolysis; D-glyceraldehyde 3-phosphate from glycerone phosphate: step 1/1. Involved in the gluconeogenesis. Catalyzes stereospecifically the conversion of dihydroxyacetone phosphate (DHAP) to D-glyceraldehyde-3-phosphate (G3P). The polypeptide is Triosephosphate isomerase (Haemophilus influenzae (strain PittEE)).